Here is a 561-residue protein sequence, read N- to C-terminus: Ribulokinase (561 aa).

It belongs to the ribulokinase family.

The enzyme catalyses D-ribulose + ATP = D-ribulose 5-phosphate + ADP + H(+). It catalyses the reaction L-ribulose + ATP = L-ribulose 5-phosphate + ADP + H(+). Its pathway is carbohydrate degradation; L-arabinose degradation via L-ribulose; D-xylulose 5-phosphate from L-arabinose (bacterial route): step 2/3. The sequence is that of Ribulokinase from Shouchella clausii (strain KSM-K16) (Alkalihalobacillus clausii).